The primary structure comprises 467 residues: MGELGTMGGTRDFLPDEMIRREYVIDTLKTIFRKYGFEPLETPAIERWETLAGKYGEEGEKLIYHVVSSGSLGTLKAGERTEHALRYDLTVPLARVVGMYGDQMVADPADPKKQTRRLPRPFKRYQIQPVWRGDRPGEGRYREFHQCDADVVGSTSPLVETELIALTVEAFKALGFADFTVKINHRQLLKGLIEQAGIAPTKEATVLTSIDKLDKLPPEKVRLELAGKGLNADQLDALFQVIALEGTSEQVLEGARSLLAGSEAAQRGIGELTKLLHYLEALGVDSAYYRIDLALARGLDYYTGTIFETVSAAKVGSVGAGGRYDRLIYDLSGGKADLPACGTSFGLDRILAAMDQLGLFASLRRAGEVLVLHFGDPGVSQVCFELVRGLREAGVRAELGYHEEPFTPNGMRQQLGYANEKGFAYAVIVGPDEMAQGQAALRDLTTRRQEKIPLATAGQLIAGRLRS.

The protein belongs to the class-II aminoacyl-tRNA synthetase family. Homodimer.

It localises to the cytoplasm. It carries out the reaction tRNA(His) + L-histidine + ATP = L-histidyl-tRNA(His) + AMP + diphosphate + H(+). This Gloeobacter violaceus (strain ATCC 29082 / PCC 7421) protein is Histidine--tRNA ligase.